A 123-amino-acid chain; its full sequence is MSGKHPLVQAVENAQLKSDIPAFAPGDTVIVQVKVKEGDRERLQAFEGVVIAKKNRGLNSAFTVRKISSGVGVERVFQTHSPVVAKIEVKRRGDVRRAKLYYLRELSGKAARIREKLPARKRG.

The protein belongs to the bacterial ribosomal protein bL19 family.

This protein is located at the 30S-50S ribosomal subunit interface and may play a role in the structure and function of the aminoacyl-tRNA binding site. The polypeptide is Large ribosomal subunit protein bL19 (Acinetobacter baylyi (strain ATCC 33305 / BD413 / ADP1)).